We begin with the raw amino-acid sequence, 354 residues long: Uroporphyrinogen decarboxylase (354 aa).

Substrate contacts are provided by residues Arg-27–Arg-31, Asp-77, Tyr-154, Ser-209, and His-327.

The protein belongs to the uroporphyrinogen decarboxylase family. As to quaternary structure, homodimer.

It localises to the cytoplasm. It catalyses the reaction uroporphyrinogen III + 4 H(+) = coproporphyrinogen III + 4 CO2. The protein operates within porphyrin-containing compound metabolism; protoporphyrin-IX biosynthesis; coproporphyrinogen-III from 5-aminolevulinate: step 4/4. Functionally, catalyzes the decarboxylation of four acetate groups of uroporphyrinogen-III to yield coproporphyrinogen-III. The chain is Uroporphyrinogen decarboxylase from Teredinibacter turnerae (strain ATCC 39867 / T7901).